We begin with the raw amino-acid sequence, 161 residues long: Regulator of ribonuclease activity A (161 aa).

It belongs to the RraA family. In terms of assembly, homotrimer. Binds to both RNA-binding sites in the C-terminal region of Rne and to RhlB.

The protein localises to the cytoplasm. Functionally, globally modulates RNA abundance by binding to RNase E (Rne) and regulating its endonucleolytic activity. Can modulate Rne action in a substrate-dependent manner by altering the composition of the degradosome. Modulates RNA-binding and helicase activities of the degradosome. This Yersinia enterocolitica serotype O:8 / biotype 1B (strain NCTC 13174 / 8081) protein is Regulator of ribonuclease activity A.